Consider the following 481-residue polypeptide: Dihydrolipoyl dehydrogenase (481 aa).

FAD is bound by residues 34–42 (EREHMGGIC) and Lys51. Cys42 and Cys47 form a disulfide bridge. Residues 195-199 (GSGAI), Glu218, and 284-287 (AVGV) contribute to the NAD(+) site. FAD-binding residues include Asp326 and Ala334. The active-site Proton acceptor is His460.

This sequence belongs to the class-I pyridine nucleotide-disulfide oxidoreductase family. As to quaternary structure, homodimer. FAD serves as cofactor.

Its subcellular location is the cytoplasm. It catalyses the reaction N(6)-[(R)-dihydrolipoyl]-L-lysyl-[protein] + NAD(+) = N(6)-[(R)-lipoyl]-L-lysyl-[protein] + NADH + H(+). Its function is as follows. Lipoamide dehydrogenase is a component of the alpha-ketoacid dehydrogenase complexes. This is Dihydrolipoyl dehydrogenase (lpdA) from Rhizobium etli (strain ATCC 51251 / DSM 11541 / JCM 21823 / NBRC 15573 / CFN 42).